The primary structure comprises 320 residues: Lipoyl synthase (320 aa).

[4Fe-4S] cluster is bound by residues Cys66, Cys71, Cys77, Cys92, Cys96, Cys99, and Ser306. One can recognise a Radical SAM core domain in the interval 77–295 (CFGHGTATFM…AEIGYAMGFS (219 aa)).

The protein belongs to the radical SAM superfamily. Lipoyl synthase family. [4Fe-4S] cluster serves as cofactor.

It is found in the cytoplasm. It catalyses the reaction [[Fe-S] cluster scaffold protein carrying a second [4Fe-4S](2+) cluster] + N(6)-octanoyl-L-lysyl-[protein] + 2 oxidized [2Fe-2S]-[ferredoxin] + 2 S-adenosyl-L-methionine + 4 H(+) = [[Fe-S] cluster scaffold protein] + N(6)-[(R)-dihydrolipoyl]-L-lysyl-[protein] + 4 Fe(3+) + 2 hydrogen sulfide + 2 5'-deoxyadenosine + 2 L-methionine + 2 reduced [2Fe-2S]-[ferredoxin]. It participates in protein modification; protein lipoylation via endogenous pathway; protein N(6)-(lipoyl)lysine from octanoyl-[acyl-carrier-protein]: step 2/2. In terms of biological role, catalyzes the radical-mediated insertion of two sulfur atoms into the C-6 and C-8 positions of the octanoyl moiety bound to the lipoyl domains of lipoate-dependent enzymes, thereby converting the octanoylated domains into lipoylated derivatives. The sequence is that of Lipoyl synthase from Thioalkalivibrio sulfidiphilus (strain HL-EbGR7).